A 724-amino-acid chain; its full sequence is Cyclin-T1 (724 aa).

Ser-117 carries the phosphoserine modification. The Nuclear localization signal signature appears at 253–270 (KRIRNWRAYQAAMKTKPD). Residue Lys-342 forms a Glycyl lysine isopeptide (Lys-Gly) (interchain with G-Cter in SUMO2) linkage. The stretch at 384-425 (SAKVSLKEYRAKHAEELAAQKRQLENMEANVKSQYAYAAQNL) forms a coiled coil. Phosphoserine is present on Ser-388. Residue Lys-390 is modified to N6-acetyllysine. Lys-415 participates in a covalent cross-link: Glycyl lysine isopeptide (Lys-Gly) (interchain with G-Cter in SUMO2). Ser-416, Ser-473, and Ser-474 each carry ADP-ribosylserine. The interval 479 to 549 (IKMRIKVHSA…RPSDPKHSSQ (71 aa)) is histidine-rich domain (HRD). A Glycyl lysine isopeptide (Lys-Gly) (interchain with G-Cter in SUMO2) cross-link involves residue Lys-480. The segment covering 483 to 507 (IKVHSAGDKHNSIEDSVTKSREHKE) has biased composition (basic and acidic residues). Disordered regions lie at residues 483-586 (IKVH…VFDH) and 691-724 (PRAG…PLPK). At Lys-484 the chain carries N6-(ADP-ribosyl)lysine. The residue at position 486 (His-486) is an ADP-ribosylhistidine. Phosphoserine is present on residues Ser-494 and Ser-498. Residues 508-529 (KQRTHPSNHHHHHNHHSHRHSH) show a composition bias toward basic residues. His-529 carries the post-translational modification ADP-ribosylhistidine. Ser-548 and Ser-551 each carry ADP-ribosylserine. An ADP-ribosylhistidine modification is found at His-555. Residues 559–569 (SLSSTLSSSSS) show a composition bias toward low complexity. Ser-562 is modified (ADP-ribosylserine). Over residues 708–724 (PPPLPSEPPPPLPPLPK) the composition is skewed to pro residues.

It belongs to the cyclin family. Cyclin C subfamily. Cyclin-T1 is the predominant cyclin that associates with CDK9 to form a heterodimer called P-TEFb. P-TEFb forms a complex with AFF4/AF5Q31. Component of a complex which is at least composed of HTATSF1/Tat-SF1, P-TEFb complex, RNA pol II, SUPT5H, and NCL/nucleolin. Component of the 7SK snRNP complex at least composed of P-TEFb (composed of CDK9 and CCNT1/cyclin-T1), HEXIM1, HEXIM2, BCDIN3, SART3 proteins and 7SK and U6 snRNAs. Interacts (via central region) with ZMYND8 (via N-terminus); the interaction is direct and the association appears to occur between homodimeric ZMYND8 and the activated form of the P-TEFb complex. Interacts with BRD4, targets chromatin binding. Interacts with JMJD6. Interacts with MDFIC. Interacts with HSF1. Interacts with HTATSF1. Interacts with TBX21. In terms of processing, ADP-ribosylation on serine residues by PARP1 in response to DNA damage disrupts the phase separation activity of CCNT1, thereby preventing activation of CDK9.

It is found in the nucleus. Regulatory subunit of the cyclin-dependent kinase pair (CDK9/cyclin-T1) complex, also called positive transcription elongation factor B (P-TEFb), which facilitates the transition from abortive to productive elongation by phosphorylating the CTD (C-terminal domain) of the large subunit of RNA polymerase II (RNA Pol II). Required to activate the protein kinase activity of CDK9: acts by mediating formation of liquid-liquid phase separation (LLPS) that enhances binding of P-TEFb to the CTD of RNA Pol II. The polypeptide is Cyclin-T1 (Ccnt1) (Mus musculus (Mouse)).